The primary structure comprises 337 residues: Heme A synthase (337 aa).

5 helical membrane passes run 6–26 (ITKW…IGGI), 93–113 (GRIT…KDVI), 118–138 (ILPY…GWYM), 154–174 (LAFH…QLIK), and 192–212 (LIFS…GAMV). Position 256 (His-256) interacts with heme. The next 3 helical transmembrane spans lie at 258–278 (LGGY…LKIE), 285–305 (IAYF…ITLL), and 308–328 (VPII…SIII). His-316 serves as a coordination point for heme.

The protein belongs to the COX15/CtaA family. Type 2 subfamily. Interacts with CtaB. Heme b is required as a cofactor.

It localises to the cell membrane. The catalysed reaction is Fe(II)-heme o + 2 A + H2O = Fe(II)-heme a + 2 AH2. Its pathway is porphyrin-containing compound metabolism; heme A biosynthesis; heme A from heme O: step 1/1. Its function is as follows. Catalyzes the conversion of heme O to heme A by two successive hydroxylations of the methyl group at C8. The first hydroxylation forms heme I, the second hydroxylation results in an unstable dihydroxymethyl group, which spontaneously dehydrates, resulting in the formyl group of heme A. The protein is Heme A synthase of Rickettsia felis (strain ATCC VR-1525 / URRWXCal2) (Rickettsia azadi).